Here is a 2672-residue protein sequence, read N- to C-terminus: eIF-2-alpha kinase activator GCN1 (2672 aa).

HEAT repeat units lie at residues 5 to 42, 79 to 117, 174 to 211, 227 to 267, 329 to 366, 372 to 410, 509 to 549, 611 to 648, 706 to 745, 902 to 932, and 933 to 970; these read LNWEDISPVLEKGTRESHVSKRVPFLQDISQLVRQETL, NLEPCLLENFIRFISDVVISNPATKAVADYLNLLDWINS, CIFQTTVKAFLKCLKDNDDSISFMKISIKTVLESYSKL, QAAL…NPPS, FASSKLINQYFSSFKSSKEVVRSVSLQSMIILLRKISN, EDLTKLIDEIFKNIKSNLNADYKSLISKILIEIPLTHYE, HGHA…NSSI, KYVTSVLLAITSELPDKEASIKVLINALVIAQWNIFNI, IQPNEFTPILCKTIEADLTADDFSRLSEEDFEIFAGEEGV, QDYLQEPLVELLTRVLFRIKFVSNQAAIDSI, and SLTYILPLLINVLEKGKAIALKNADKPVVKAEFVEEDE. The HEAT 12; degenerate repeat unit spans residues 975 to 994; that stretch reads LLLAMEIISVHAEAFEDPSI. Residues 995–1030 form an HEAT 13; degenerate repeat; sequence PRISIVEVLLSLLSLPSKAKIAKDCFNALCQSISVA. HEAT repeat units follow at residues 1031-1067, 1099-1138, 1185-1224, 1243-1281, 1284-1321, 1363-1401, 1405-1442, 1444-1480, 1484-1521, 1523-1559, 1561-1598, 1603-1640, 1641-1679, 1681-1717, 1721-1758, 1760-1796, 1825-1862, 1863-1903, 1905-1942, 1947-1984, 1985-2024, 2026-2055, 2057-2095, 2097-2134, 2138-2175, 2206-2243, 2250-2286, 2290-2328, 2347-2384, 2392-2429, 2450-2487, and 2506-2546; these read PNQEDLDMILSNLLSPNQFVRSTILETLDNEFELEPF, VVNDELLKSLFPLFNQDDSGLRLFAANAYAFGAVSLFTSE, STVAITLKIMAKAFSAEDDTVVNIIKFLVDDGGLVDREPI, QNSKDLIPIFEEALSSSTDSALKENVIILYGTLARHLQQ, ARIHTIIERLLSTLDTPSADIQQAVSACIAPLVFQFKQ, LSEFDIIRNLIEAAEDKKEPKRRESVGFCFQYLSESLGK, PYVIEILPNILKNLGDAVPEVRDATARATKAIMAHTTG, GVKKLIPVAVSNLDEIAWRTKRGSVQLLGNMAYLDPT, ASLSTIVPEIVGVLNDSHKEVRKAADESLKRFGEVIRN, EIQKLVPVLLQAIGDPTKYTEEALDSLIQTQFVHYID, PSLALIIHIIHRGMHDRSANIKRKACKIVGNMAILVDT, PYLQQLIDEVEIAMVDPVPNTRATAARALGALVERLGE, EQFPDLIPRLLDTLSDESKSGDRLGSAQALAEVISGLGL, KLDEMLPTILAGVTNFRAYIREGFMPLLLFLPVCFGS, PYINQIIQPILSGLADNDENIRDTALKAGKLIVKNYAT, AVDLLLPELERGMFDENDRIRLSSVQLTGELLFQVTG, DRRDRILAALFVCRNDTSGIVRATTVDIWKALVPNTPR, AVKE…RVGG, ALSQLLPSLEESLIETSNSDSRQGVCIALYELIESAST, QFQSTIVNIIRTALIDESATVREAAALSFDVFQDVVGK, TAVDEVLPYLLHMLESSDNSDFALLGLQEIMSKKSDVIFP, LIPTLLAPPIDAFRASALGSLAEVAGSALY, RLSIIINALVDAIIGTSEDESTKGALELALDRVFLSVND, EGLHPLLQQIMSLLKSDNIEKRIAVLERLPNFFDKTVL, VYIPNFVSHAILSLDDEDQRVVNGNFNALSTLLKKVDK, RGPNCVLPIFLHGLMYGSNDEREESALAIADVVSKTPA, VSVITGPLIRVVGERFSSDIKAAILFALNVLFIKIPM, PFIPQLQRTFVKSLSDATNETLRLRAAKALGALIEHQPR, GVKTAMLKALLEVIMKAGSKLNENSKTNIVNLVEEEML, VAYAKLIGSLSEILSNDEAHKILQDKVLNADLDGETGK, GLIDEFVSYILNAIRSPDVYFGENGTIAAGKLLLLEGE, and ENIN…FKFD. The EF3-like region stretch occupies residues 1330–1641; sequence LMEKLLNPTV…GALVERLGEE (312 aa). The segment at 2207–2356 is RWDBD region; the sequence is GPNCVLPIFL…GVKTAMLKAL (150 aa).

It belongs to the GCN1 family. As to quaternary structure, interacts (via N- and C-terminus) with GCN2 (via N-terminal RWD domain); this interaction stimulates GCN2 kinase activity in a GCN20-dependent manner in response to amino acid starvation. Interacts (via C-terminus) with GCN20 (via N-terminus); this interaction stimulates GCN2 kinase activity in response to amino acid starvation. The GCN1-GCN20 complex interacts with GCN2 on translating ribosomes in amino acid-starved cells; GCN1 may bind near the ribosomal A-site and promotes the transfer of uncharged tRNAs from the A-site to the tRNA-binding domain in GCN2 for its subsequent kinase activation, and hence allowing GCN4 translational activation and derepression of amino acid biosynthetic genes. Interacts (via C-terminus) with YIH1 (via N-terminus); this interaction reduces the GCN1-GCN20 complex formation and prevents the interaction of GCN1 with GCN2 and GCN2 kinase activation in amino acid-starved cells. Interacts with GIR2; this interaction prevents the interaction of GCN1 with GCN2 and GCN2 kinase activation in amino acid-starved cells. Interacts (via middle region) with RPS10A and RPS10B; these interactions are direct and promote GCN2 kinase activation. Associates (via N-terminus) with ribosomes; this association is stimulated in a ATP- and GCN20-dependent manner and is necessary to activate GCN2 kinase activity.

It is found in the cytoplasm. Ribosome collision sensor that activates a translation quality control pathway when a ribosome has stalled during translation. Directly binds to the ribosome and acts as a sentinel for colliding ribosomes. GCN1 also acts as a positive activator of the integrated stress response (ISR) by mediating activation of GCN2 in response to low amino acid, carbon, or purine availability. Component of the GCN1-GCN20 complex that forms a complex with GCN2 on translating ribosomes: during this process, GCN1 acts as a chaperone to facilitate delivery of uncharged tRNAs that enter the A-site of ribosomes to the tRNA-binding domain of GCN2, and hence stimulating GCN2 kinase activity, leading to phosphorylation of eukaryotic translation initiation factor 2 (eIF-2-alpha/SUI2). eIF-2-alpha/SUI2 phosphorylation converts eIF-2-alpha/SUI2 into a global protein synthesis inhibitor, leading to a global attenuation of cap-dependent translation, and thus to a reduced overall utilization of amino acids, while concomitantly initiating the preferential translation of ISR-specific mRNAs, such as the transcriptional activator GCN4, and hence allowing GCN4-mediated reprogramming of amino acid biosynthetic gene expression to alleviate nutrient depletion. This is eIF-2-alpha kinase activator GCN1 from Saccharomyces cerevisiae (strain ATCC 204508 / S288c) (Baker's yeast).